Consider the following 840-residue polypeptide: V-type proton ATPase subunit a, vacuolar isoform (840 aa).

A2 bears the N-acetylalanine mark. The Cytoplasmic segment spans residues 2–404 (AEKEEAIFRS…DCYGIAQYRE (403 aa)). Residues 117 to 145 (LEERLIQMEDATDQIEVQKNDLEQYRFIL) adopt a coiled-coil conformation. A helical membrane pass occupies residues 405-423 (INAGLPTIVTFPFMFAIMF). Topologically, residues 424–425 (GD) are vacuolar. A helical membrane pass occupies residues 426-442 (MGHGFLMTLAALSLVLN). Residues 443-456 (EKKINKMKRGEIFD) are Cytoplasmic-facing. A helical membrane pass occupies residues 457–486 (MAFTGRYIILLMGVFSMYTGFLYNDIFSKT). Residues 487–534 (MTIFKSGWKWPDHWKKGESITATSVGTYPIGLDWAWHGTENALLFSNS) lie on the Vacuolar side of the membrane. The helical transmembrane segment at 535–554 (YKMKLSILMGFIHMTYSYFF) threads the bilayer. Residues 555-572 (SLANHLYFNSMIDIIGNF) lie on the Cytoplasmic side of the membrane. Residues 573–593 (IPGLLFMQGIFGYLSVCIVYK) traverse the membrane as a helical segment. The Vacuolar portion of the chain corresponds to 594–636 (WAVDWVKDGKPAPGLLNMLINMFLSPGTIDDELYPHQAKVQVF). Residues 637-656 (LLLMALVCIPWLLLVKPLHF) form a helical membrane-spanning segment. The Cytoplasmic segment spans residues 657 to 719 (KFTHKKKSHE…DIMIHQVIHT (63 aa)). A helical transmembrane segment spans residues 720–744 (IEFCLNCVSHTASYLRLWALSLAHA). At 745–765 (QLSSVLWTMTIQIAFGFRGFV) the chain is on the vacuolar side. Residues 766 to 804 (GVFMTVALFAMWFALTCAVLVLMEGTSAMLHSLRLHWVE) traverse the membrane as a helical segment. Residues 805 to 840 (SMSKFFVGEGLPYEPFAFEYKDMEVAVASASSSASS) are Cytoplasmic-facing.

Belongs to the V-ATPase 116 kDa subunit family. In terms of assembly, V-ATPase is a heteromultimeric enzyme composed of a peripheral catalytic V1 complex (components A to H) attached to an integral membrane V0 proton pore complex (components: a, c, c', c'', d, e, f and VOA1). In terms of processing, glycosylated.

It is found in the vacuole membrane. Its function is as follows. Subunit of the V0 complex of vacuolar(H+)-ATPase (V-ATPase), a multisubunit enzyme composed of a peripheral complex (V1) that hydrolyzes ATP and a membrane integral complex (V0) that translocates protons. V-ATPase is responsible for acidifying and maintaining the pH of intracellular compartments. Is present only in vacuolar V-ATPase complexes; enzymes containing this subunit have a 4-fold higher ratio of proton transport to ATP hydrolysis than complexes containing the Golgi/endosomal isoform and undergo reversible dissociation of V1 and V0 in response to glucose depletion. This Saccharomyces cerevisiae (strain ATCC 204508 / S288c) (Baker's yeast) protein is V-type proton ATPase subunit a, vacuolar isoform.